Consider the following 282-residue polypeptide: Stress response regulator protein 1 (282 aa).

Low complexity-rich tracts occupy residues 12-30 and 41-58; these read NLSRSSSPAAPPTTNHSST and SLDTNSQSDSNSTQSNNN. Disordered regions lie at residues 12 to 31, 41 to 84, and 112 to 139; these read NLSRSSSPAAPPTTNHSSTV, SLDT…DDED, and LTPFDGQTTSPQDSIISSKSSNKSTTVV. Residues 66-77 show a composition bias toward polar residues; it reads SDYNSYTHNQYY. The span at 125-139 shows a compositional bias: low complexity; sequence SIISSKSSNKSTTVV. The region spanning 155-273 is the Response regulatory domain; that stretch reads SFLIVDDNII…LDFMANSIDD (119 aa). 4-aspartylphosphate is present on D206.

Required for stress adaptation, morphogenesis and virulence. The chain is Stress response regulator protein 1 (SRR1) from Candida albicans (strain WO-1) (Yeast).